We begin with the raw amino-acid sequence, 966 residues long: Polycystin-2 (966 aa).

Positions 1–106 (MVNSRRVQPQ…DDDEVEGEEG (106 aa)) are disordered. Residues 1 to 217 (MVNSRRVQPQ…NANREKYLKS (217 aa)) lie on the Cytoplasmic side of the membrane. Positions 30–44 (VAGGAGLAVPGGLGE) are enriched in gly residues. A compositionally biased stretch (basic and acidic residues) spans 46 to 56 (RGLEIEMERIR). The segment covering 58–79 (AAARDPPAGASASPSPPLSSCS) has biased composition (low complexity). Ser72 and Ser76 each carry phosphoserine. The segment covering 91 to 105 (EAEEDDDDDEVEGEE) has biased composition (acidic residues). Position 135 is an omega-N-methylarginine (Arg135). Residues 147–179 (HLSGRRRRLEDQGAQCPSPAGGGDPLHRHLPLE) form a disordered region. The helical transmembrane segment at 218–239 (VLRELVTYLFFLVVLCILTYGM) threads the bilayer. Topologically, residues 240–466 (MSSNVYYYTR…PVKLIRYVTA (227 aa)) are extracellular. Asn297, Asn303, and Asn326 each carry an N-linked (GlcNAc...) asparagine glycan. Cys329 and Cys342 form a disulfide bridge. N-linked (GlcNAc...) asparagine glycosylation is found at Asn360 and Asn373. A helical membrane pass occupies residues 467–487 (FDFFLAACEIIFCFFIIYYVV). At 488 to 503 (EEILEIRIHRLSYFRS) the chain is on the cytoplasmic side. The helical transmembrane segment at 504-524 (FWNCLDVVIVVLSVVAMVINI) threads the bilayer. At 525-550 (YRMSNAEGLLQFLEDQNSFPNFEHVA) the chain is on the extracellular side. A helical transmembrane segment spans residues 551–571 (YWQIQFNNISAVMVFLVWIKL). Gln555 lines the cholesterol pocket. Over 572–595 (FKFINFNRTMSQLSTTMSRCAKDL) the chain is Cytoplasmic. The helical transmembrane segment at 596 to 617 (FGFTIMFSIIFLAYAQLAYLVF) threads the bilayer. At 618–629 (GTQVDDFSTFQE) the chain is on the extracellular side. The segment at residues 630-644 (CIFTQFRIILGDINF) is an intramembrane region (pore-forming). Leu639 serves as a coordination point for Ca(2+). The short motif at 639 to 641 (LGD) is the Selectivity filter element. Residues 645–652 (AEIEEANR) lie on the Extracellular side of the membrane. The helical transmembrane segment at 653–673 (VLGPLYFTTFVFFMFFILLNM) threads the bilayer. Residues 674-966 (FLAIINDSYS…GGNGSANVHA (293 aa)) lie on the Cytoplasmic side of the membrane. An EF-hand domain is found at 748-783 (HTDAEIEAIFTKYDQDGDQELTEREHQQMRDDLEKE). Ca(2+) contacts are provided by Asp761, Asp763, Asp765, Glu767, and Glu772. The interval 764 to 828 (GDQELTEREH…GHSSRRRGSI (65 aa)) is disordered. Positions 768–793 (LTEREHQQMRDDLEKEREDLDLEHSS) are enriched in basic and acidic residues. A compositionally biased stretch (low complexity) spans 794-805 (LPRPMSSRSFPR). 4 positions are modified to phosphoserine: Ser799, Ser806, Ser810, and Ser827. The linker stretch occupies residues 801–820 (RSFPRSLDDSEEEDDEDSGH). The segment at 808-819 (DDSEEEDDEDSG) is important for interaction with PACS1 and PACS2. Residues 831-870 (GVSYEEFQVLVRRVDRMEHSIGSIVSKIDAVIVKLEIMER) are a coiled coil. Residues 914–966 (WESDDAASQTGHGVSTQVGLGGQPHPRNPRPPSSQSAEGLEGGGGNGSANVHA) form a disordered region. The segment covering 919-931 (AASQTGHGVSTQV) has biased composition (polar residues).

This sequence belongs to the polycystin family. As to quaternary structure, homotetramer. Component of the heterotetrameric polycystin channel complex with PKD1; the tetramer contains one PKD1 chain and three PKD2 chains. Interaction with PKD1 is required for ciliary localization. Isoform 1 interacts with PKD1 while isoform 3 does not. Interacts with PKD1L1. Interacts with CD2AP. Interacts with HAX1. Interacts with NEK8. Part of a complex containing AKAP5, ADCY5, ADCY6 and PDE4C. Interacts (via C-terminus) with TRPV4 (via C-terminus). Interacts (via C-terminal acidic region) with PACS1 and PACS2; these interactions retain the protein in the endoplasmic reticulum and prevent trafficking to the cell membrane. Interacts with TMEM33; enhancing its opening at the ER membrane. Interacts with TMEM120A; TMEM120A inhibits PKD2 channel activity through the physical association of PKD2 with TMEM120A. Interacts (via N-terminus) with RYR2; regulates RYR2 channel activity. N-glycosylated. The four subunits in a tetramer probably differ in the extent of glycosylation; simultaneous glycosylation of all experimentally validated sites would probably create steric hindrance. In terms of processing, sumoylated by SUMO1; sumoylation regulates PKD2 membrane recycling and is necessary for intravascular pressure-induced arterial contractility. Post-translationally, phosphorylated. Phosphorylation is important for protein function; a mutant that lacks the N-terminal phosphorylation sites cannot complement a zebrafish pkd2-deficient mutant. PKD-mediated phosphorylation at the C-terminus regulates its function in the release of Ca(2+) stores from the endoplasmic reticulum. Phosphorylation at Ser-810 regulates PKD2 trafficking. Phosphorylation at Ser-72 is required for PKD2 trafficking to or retention at the lateral plasma membrane. Phosphorylation at Ser-799, Ser-810 and Ser-827 regulates PKD2 channel activity. Detected in kidney epithelium (at protein level). Highly expressed on basolateral membranes in distal convoluted tubules and medullary thick ascending limbs of Henle. Detected at much lower levels in cortical and medullary collecting tubules, and not detected in the glomerular tuft, in thin limbs of Henle, interstitium and blood vessels (at protein level). Expressed in mesenchymally derived structures in the developing embryo at day 12.5. Isoform 1 is predominantly expressed in kidney at all developmental stages with high levels also detected in lung. Isoform 3 shows highest expression in brain with lower expression in kidney and lung, low levels in thymus and is hardly detectable in liver.

It is found in the cell projection. The protein resides in the cilium membrane. The protein localises to the cell membrane. It localises to the basolateral cell membrane. Its subcellular location is the cytoplasmic vesicle membrane. It is found in the endoplasmic reticulum membrane. The protein resides in the golgi apparatus. The protein localises to the vesicle. It localises to the secreted. Its subcellular location is the extracellular exosome. It catalyses the reaction K(+)(in) = K(+)(out). It carries out the reaction Na(+)(in) = Na(+)(out). The catalysed reaction is Ca(2+)(in) = Ca(2+)(out). Its activity is regulated as follows. Channel activity is regulated by phosphorylation. The channel is activated by increased cytoplasmic Ca(2+) (in the uM range) and by membrane depolarization. TMEM120A inhibits the channel activity of PKD2, and mediates mechanosensitivity of the PKD2-TMEM120A channel complex. At the endoplasmic reticulum membrane (ER), TMEM33 enhances its channel activity. PKD1/ PKD2 complex on the plasma membrane is activated by PKD1 N-terminus. In terms of biological role, forms a nonselective cation channel. Can function as a homotetrameric ion channel or can form heteromer with PKD1. Displays distinct function depending on its subcellular localization and regulation by its binding partners. Functions as a cation channel, with a preference for monovalent cations over divalent cations that allows K(+), Na(+) and Ca(2+) influx, with low selectivity for Ca(2+). Involved in fluid-flow mechanosensation by the primary cilium in renal epithelium. In the endoplasmic reticulum, likely functions as a K(+) channel to facilitate Ca(2+) release. The heterotetrameric PKD1/PKD2 channel has higher Ca(2+) permeability than homomeric PKD2 channel and acts as a primarily Ca(2+)-permeable channel. PKD1 and PKD2 may function through a common signaling pathway that is necessary to maintain the normal, differentiated state of renal tubule cells. Interacts with and acts as a regulator of a number of other channels, such as TRPV4, TRPC1, IP3R, RYR2, ultimately further affecting intracellular signaling, to modulate intracellular Ca(2+) signaling. Together with TRPV4, forms mechano- and thermosensitive channels in cilium. In cardiomyocytes, PKD2 modulates Ca(2+) release from stimulated RYR2 receptors through direct association. Also involved in left-right axis specification via its role in sensing nodal flow; forms a complex with PKD1L1 in cilia to facilitate flow detection in left-right patterning. Acts as a regulator of cilium length together with PKD1. Mediates systemic blood pressure and contributes to the myogenic response in cerebral arteries though vasoconstriction. This is Polycystin-2 from Mus musculus (Mouse).